Here is a 525-residue protein sequence, read N- to C-terminus: GMP synthase [glutamine-hydrolyzing] (525 aa).

Residues 8 to 207 (KILILDFGSQ…ALEICGCPAN (200 aa)) form the Glutamine amidotransferase type-1 domain. C85 serves as the catalytic Nucleophile. Active-site residues include H181 and E183. In terms of domain architecture, GMPS ATP-PPase spans 208–400 (WKPSSIIEDA…LGLPYDMLYR (193 aa)). An ATP-binding site is contributed by 235–241 (SGGVDSS).

Homodimer.

It catalyses the reaction XMP + L-glutamine + ATP + H2O = GMP + L-glutamate + AMP + diphosphate + 2 H(+). It functions in the pathway purine metabolism; GMP biosynthesis; GMP from XMP (L-Gln route): step 1/1. Functionally, catalyzes the synthesis of GMP from XMP. In Shewanella pealeana (strain ATCC 700345 / ANG-SQ1), this protein is GMP synthase [glutamine-hydrolyzing].